Reading from the N-terminus, the 245-residue chain is NAD-dependent protein deacylase (245 aa).

A Deacetylase sirtuin-type domain is found at 1–245 (MEAVWESARI…RLSRAMGIDI (245 aa)). 22 to 41 (GAGISAESGIPTFRGKDGLW) contributes to the NAD(+) binding site. Y66 and R69 together coordinate substrate. 100 to 103 (QNVD) provides a ligand contact to NAD(+). Catalysis depends on H118, which acts as the Proton acceptor. Zn(2+) contacts are provided by C126, C129, C146, and C149. NAD(+) contacts are provided by residues 186–188 (GTS), 212–214 (NPE), and M241.

The protein belongs to the sirtuin family. Class III subfamily. It depends on Zn(2+) as a cofactor.

It localises to the cytoplasm. The enzyme catalyses N(6)-acetyl-L-lysyl-[protein] + NAD(+) + H2O = 2''-O-acetyl-ADP-D-ribose + nicotinamide + L-lysyl-[protein]. The catalysed reaction is N(6)-succinyl-L-lysyl-[protein] + NAD(+) + H2O = 2''-O-succinyl-ADP-D-ribose + nicotinamide + L-lysyl-[protein]. In terms of biological role, NAD-dependent lysine deacetylase and desuccinylase that specifically removes acetyl and succinyl groups on target proteins. Modulates the activities of several proteins which are inactive in their acylated form. Deacetylates the N-terminal lysine residue of Alba, the major archaeal chromatin protein and that, in turn, increases Alba's DNA binding affinity, thereby repressing transcription. In Aeropyrum pernix (strain ATCC 700893 / DSM 11879 / JCM 9820 / NBRC 100138 / K1), this protein is NAD-dependent protein deacylase.